A 226-amino-acid chain; its full sequence is ATP synthase F(0) complex subunit a (226 aa).

5 helical membrane passes run phenylalanine 9 to leucine 29, tryptophan 68 to leucine 88, glutamine 97 to phenylalanine 117, isoleucine 138 to valine 158, and isoleucine 184 to phenylalanine 204.

The protein belongs to the ATPase A chain family. Component of the ATP synthase complex composed at least of ATP5F1A/subunit alpha, ATP5F1B/subunit beta, ATP5MC1/subunit c (homooctomer), MT-ATP6/subunit a, MT-ATP8/subunit 8, ATP5ME/subunit e, ATP5MF/subunit f, ATP5MG/subunit g, ATP5MK/subunit k, ATP5MJ/subunit j, ATP5F1C/subunit gamma, ATP5F1D/subunit delta, ATP5F1E/subunit epsilon, ATP5PF/subunit F6, ATP5PB/subunit b, ATP5PD/subunit d, ATP5PO/subunit OSCP. ATP synthase complex consists of a soluble F(1) head domain (subunits alpha(3) and beta(3)) - the catalytic core - and a membrane F(0) domain - the membrane proton channel (subunits c, a, 8, e, f, g, k and j). These two domains are linked by a central stalk (subunits gamma, delta, and epsilon) rotating inside the F1 region and a stationary peripheral stalk (subunits F6, b, d, and OSCP). Interacts with DNAJC30; interaction is direct.

Its subcellular location is the mitochondrion inner membrane. It carries out the reaction H(+)(in) = H(+)(out). Subunit a, of the mitochondrial membrane ATP synthase complex (F(1)F(0) ATP synthase or Complex V) that produces ATP from ADP in the presence of a proton gradient across the membrane which is generated by electron transport complexes of the respiratory chain. ATP synthase complex consist of a soluble F(1) head domain - the catalytic core - and a membrane F(1) domain - the membrane proton channel. These two domains are linked by a central stalk rotating inside the F(1) region and a stationary peripheral stalk. During catalysis, ATP synthesis in the catalytic domain of F(1) is coupled via a rotary mechanism of the central stalk subunits to proton translocation. With the subunit c (ATP5MC1), forms the proton-conducting channel in the F(0) domain, that contains two crucial half-channels (inlet and outlet) that facilitate proton movement from the mitochondrial intermembrane space (IMS) into the matrix. Protons are taken up via the inlet half-channel and released through the outlet half-channel, following a Grotthuss mechanism. In Capra hircus (Goat), this protein is ATP synthase F(0) complex subunit a.